Here is a 100-residue protein sequence, read N- to C-terminus: Small ribosomal subunit protein uS14c (100 aa).

Belongs to the universal ribosomal protein uS14 family. As to quaternary structure, part of the 30S ribosomal subunit.

The protein resides in the plastid. It localises to the chloroplast. In terms of biological role, binds 16S rRNA, required for the assembly of 30S particles. This Carica papaya (Papaya) protein is Small ribosomal subunit protein uS14c.